The following is a 245-amino-acid chain: tRNA pseudouridine synthase A (245 aa).

The Nucleophile role is filled by D52. Y110 contacts substrate.

This sequence belongs to the tRNA pseudouridine synthase TruA family. In terms of assembly, homodimer.

The catalysed reaction is uridine(38/39/40) in tRNA = pseudouridine(38/39/40) in tRNA. Its function is as follows. Formation of pseudouridine at positions 38, 39 and 40 in the anticodon stem and loop of transfer RNAs. The polypeptide is tRNA pseudouridine synthase A (Pseudothermotoga lettingae (strain ATCC BAA-301 / DSM 14385 / NBRC 107922 / TMO) (Thermotoga lettingae)).